A 151-amino-acid polypeptide reads, in one-letter code: MSHLNIANLGEDFVAQWLQSTGWMILNRQFSCRWGEIDIIAQHTRNNQESILAFVEVKTRSPGNWDDGGRGAITLKKQAKIERTARIFLAKYPDKAEYICRFDVAIVSYQIISKQDHELSITQESVTSSSVGEYKFQLQEYIPAAFECLID.

Belongs to the UPF0102 family.

The protein is UPF0102 protein Ava_4800 of Trichormus variabilis (strain ATCC 29413 / PCC 7937) (Anabaena variabilis).